The following is a 276-amino-acid chain: Radial spoke head protein 9 homolog (276 aa).

The protein belongs to the flagellar radial spoke RSP9 family. As to quaternary structure, component of the axonemal radial spoke 1 (RS1) and 2 (RS2) complexes, at least composed of spoke head proteins RSPH1, RSPH3, RSPH9 and the cilia-specific component RSPH4A or sperm-specific component RSPH6A, spoke stalk proteins RSPH14, DNAJB13, DYDC1, ROPN1L and NME5, and the RS1 complex-specific anchor protein IQUB. Interacts with IQUB. Interacts with RSPH3B. Interacts with RSPH4A. Interacts with RSPH6A. Interacts with CFAP61. Interacts with LRRC23. In terms of tissue distribution, expressed in the testis, trachea, lung, oviduct and ependymal cells (at protein level).

It localises to the cytoplasm. The protein resides in the cytoskeleton. Its subcellular location is the cilium axoneme. The protein localises to the flagellum axoneme. It is found in the cell projection. It localises to the kinocilium. In terms of biological role, functions as part of axonemal radial spoke complexes that play an important part in the motility of sperm and cilia. Essential for both the radial spoke head assembly and the central pair microtubule stability in ependymal motile cilia. Required for motility of olfactory and neural cilia and for the structural integrity of ciliary axonemes in both 9+0 and 9+2 motile cilia. The polypeptide is Radial spoke head protein 9 homolog (Rsph9) (Mus musculus (Mouse)).